We begin with the raw amino-acid sequence, 101 residues long: Small ribosomal subunit protein uS14m (101 aa).

Belongs to the universal ribosomal protein uS14 family. Component of the mitochondrial ribosome small subunit (28S) which comprises a 12S rRNA and about 30 distinct proteins. Interacts with LIAT1.

The protein resides in the mitochondrion. In Dictyostelium discoideum (Social amoeba), this protein is Small ribosomal subunit protein uS14m (mrps14).